The primary structure comprises 271 residues: Urease accessory protein UreD (271 aa).

Belongs to the UreD family. In terms of assembly, ureD, UreF and UreG form a complex that acts as a GTP-hydrolysis-dependent molecular chaperone, activating the urease apoprotein by helping to assemble the nickel containing metallocenter of UreC. The UreE protein probably delivers the nickel.

The protein localises to the cytoplasm. Its function is as follows. Required for maturation of urease via the functional incorporation of the urease nickel metallocenter. The chain is Urease accessory protein UreD from Mycolicibacterium smegmatis (strain ATCC 700084 / mc(2)155) (Mycobacterium smegmatis).